A 266-amino-acid chain; its full sequence is MKIGKFVIEGNAAIMGILNVTPDSFSDGGSYTTVQKALDHVEQMIADGAKIIDVGGESTRPGCQFVSATDEIDRVVPVIKAIKENYDILISIDTYKTETARAALEAGADILNDVWAGLYDGQMFALAAEYDAPIILMHNQDEEVYQEVTQDVCDFLGNRAQAALDAGVPKNNIWIDPGFGFAKSVQQNMELLKGLDRVCQLGYPVLFGISRKRVVDALLGGNTKAKERDGATAALSAYALGKGCQIVRVHDVKANQDIVAVLSQLM.

A Pterin-binding domain is found at 12–260 (AAIMGILNVT…DVKANQDIVA (249 aa)). N19 is a binding site for Mg(2+). (7,8-dihydropterin-6-yl)methyl diphosphate is bound by residues T59, D93, N112, D176, K212, and 248–250 (RVH).

It belongs to the DHPS family. Homodimer or homotrimer. It depends on Mg(2+) as a cofactor.

It carries out the reaction (7,8-dihydropterin-6-yl)methyl diphosphate + 4-aminobenzoate = 7,8-dihydropteroate + diphosphate. The protein operates within cofactor biosynthesis; tetrahydrofolate biosynthesis; 7,8-dihydrofolate from 2-amino-4-hydroxy-6-hydroxymethyl-7,8-dihydropteridine diphosphate and 4-aminobenzoate: step 1/2. Its function is as follows. Catalyzes the condensation of para-aminobenzoate (pABA) with 6-hydroxymethyl-7,8-dihydropterin diphosphate (DHPt-PP) to form 7,8-dihydropteroate (H2Pte), the immediate precursor of folate derivatives. This Streptococcus pyogenes serotype M6 (strain ATCC BAA-946 / MGAS10394) protein is Dihydropteroate synthase (folP).